Reading from the N-terminus, the 809-residue chain is Chorion peroxidase (809 aa).

Positions 1–21 (MSRILFILLLLIVTQLSELQA) are cleaved as a signal peptide. A propeptide spanning residues 22–223 (AAFSVRQNRF…KFTETPLAHH (202 aa)) is cleaved from the precursor. The segment at 36-55 (DLQTPAPLATSTESSKKPEK) is disordered. N-linked (GlcNAc...) asparagine glycosylation occurs at Asn110. Cys224 carries the post-translational modification N-acetylcysteine; in Chorion peroxidase light chain. An intrachain disulfide couples Cys230 to Cys244. The active-site Proton acceptor is the His320. Cysteines 448 and 457 form a disulfide. Residue His568 participates in heme b binding. Cys765 and Cys794 are oxidised to a cystine.

This sequence belongs to the peroxidase family. XPO subfamily. Heterodimer. Requires heme b as cofactor. In terms of tissue distribution, expressed at low levels in the germarium and early follicles. Expression becomes progressively stronger during vitellogenesis, and is highly expressed in germ cells and somatic cells. A subset of follicle cells, termed border cells (BC), exhibit a high level of expression.

The protein resides in the secreted. The enzyme catalyses 2 a phenolic donor + H2O2 = 2 a phenolic radical donor + 2 H2O. Its function is as follows. Required for ovarian follicle maturation. Involved in the formation of a rigid and insoluble egg chorion by catalyzing chorion protein cross-linking through dityrosine formation and phenol oxidase-catalyzed chorion melanization. The sequence is that of Chorion peroxidase (Pxt) from Drosophila melanogaster (Fruit fly).